Consider the following 272-residue polypeptide: Glutamate 5-kinase (272 aa).

Lys15 serves as a coordination point for ATP. Residues Ser55, Asp142, and Asn158 each contribute to the substrate site. ATP contacts are provided by residues 178 to 179 (SD) and 220 to 226 (TGGMLSK).

The protein belongs to the glutamate 5-kinase family.

The protein localises to the cytoplasm. The enzyme catalyses L-glutamate + ATP = L-glutamyl 5-phosphate + ADP. The protein operates within amino-acid biosynthesis; L-proline biosynthesis; L-glutamate 5-semialdehyde from L-glutamate: step 1/2. In terms of biological role, catalyzes the transfer of a phosphate group to glutamate to form L-glutamate 5-phosphate. This chain is Glutamate 5-kinase, found in Streptococcus equi subsp. zooepidemicus (strain H70).